Here is a 388-residue protein sequence, read N- to C-terminus: Pepsin A-1 (388 aa).

The first 15 residues, 1-15 (MKWLLLLGLVALSEC), serve as a signal peptide directing secretion. Propeptides (activation peptide) lie at residues 16–40 (IIYKVPLVRKKSLRRNLSEHGLLKD) and 41–62 (FLKKHNLNPASKYFPQAEAPTL). Positions 76-385 (YFGTIGIGTP…DRANNQVGLA (310 aa)) constitute a Peptidase A1 domain. The active site involves Asp-94. Cysteines 107 and 112 form a disulfide. Residue Ser-130 is modified to Phosphoserine. Cys-268 and Cys-272 are joined by a disulfide. Asp-277 is an active-site residue. An intrachain disulfide couples Cys-311 to Cys-344.

This sequence belongs to the peptidase A1 family. Post-translationally, each pepsinogen is converted to corresponding pepsin at pH 2.0 in part as a result of the release of a 47 AA activation segment and in part as a result of stepwise proteolytic cleavage via an intermediate form(s).

The protein resides in the secreted. The enzyme catalyses Preferential cleavage: hydrophobic, preferably aromatic, residues in P1 and P1' positions. Cleaves 1-Phe-|-Val-2, 4-Gln-|-His-5, 13-Glu-|-Ala-14, 14-Ala-|-Leu-15, 15-Leu-|-Tyr-16, 16-Tyr-|-Leu-17, 23-Gly-|-Phe-24, 24-Phe-|-Phe-25 and 25-Phe-|-Tyr-26 bonds in the B chain of insulin.. Shows particularly broad specificity; although bonds involving phenylalanine and leucine are preferred, many others are also cleaved to some extent. This is Pepsin A-1 (PGA) from Macaca fuscata fuscata (Japanese macaque).